We begin with the raw amino-acid sequence, 144 residues long: Large ribosomal subunit protein uL15 (144 aa).

Positions 1–59 are disordered; sequence MHLNTLAPAPGAKKSSKRVGRGMGSGLGKTGGRGHKGQKSRSGGSVKPGFEGGQMPIQR. Residues 21 to 31 show a composition bias toward gly residues; it reads RGMGSGLGKTG.

Belongs to the universal ribosomal protein uL15 family. Part of the 50S ribosomal subunit.

Binds to the 23S rRNA. The polypeptide is Large ribosomal subunit protein uL15 (Pseudoalteromonas atlantica (strain T6c / ATCC BAA-1087)).